A 277-amino-acid chain; its full sequence is Putative protease slr0021 (277 aa).

Ser85 serves as the catalytic Nucleophile. The active-site Proton donor/acceptor is Lys137.

This sequence belongs to the peptidase S49 family.

This chain is Putative protease slr0021, found in Synechocystis sp. (strain ATCC 27184 / PCC 6803 / Kazusa).